A 448-amino-acid polypeptide reads, in one-letter code: GTPase Der (448 aa).

EngA-type G domains follow at residues 3–167 and 182–355; these read PVIA…EPPE and TRLA…ASAT. Residues 9–16, 56–60, 119–122, 188–195, 235–239, and 300–303 contribute to the GTP site; these read GRPNVGKS, DTGGF, NKAE, DTAGL, and NKWD. In terms of domain architecture, KH-like spans 356-440; that stretch reads RKLPTPQLTR…PMRIELRASH (85 aa).

It belongs to the TRAFAC class TrmE-Era-EngA-EngB-Septin-like GTPase superfamily. EngA (Der) GTPase family. As to quaternary structure, associates with the 50S ribosomal subunit.

Its function is as follows. GTPase that plays an essential role in the late steps of ribosome biogenesis. The protein is GTPase Der of Leptothrix cholodnii (strain ATCC 51168 / LMG 8142 / SP-6) (Leptothrix discophora (strain SP-6)).